A 196-amino-acid polypeptide reads, in one-letter code: dITP/XTP pyrophosphatase (196 aa).

Residue 9–14 (TSNAGK) coordinates substrate. Positions 39 and 68 each coordinate Mg(2+). The active-site Proton acceptor is the D68. Substrate is bound by residues S69, 147–150 (FGYD), K170, and 175–176 (HR).

This sequence belongs to the HAM1 NTPase family. In terms of assembly, homodimer. Requires Mg(2+) as cofactor.

The enzyme catalyses XTP + H2O = XMP + diphosphate + H(+). It catalyses the reaction dITP + H2O = dIMP + diphosphate + H(+). It carries out the reaction ITP + H2O = IMP + diphosphate + H(+). Its function is as follows. Pyrophosphatase that catalyzes the hydrolysis of nucleoside triphosphates to their monophosphate derivatives, with a high preference for the non-canonical purine nucleotides XTP (xanthosine triphosphate), dITP (deoxyinosine triphosphate) and ITP. Seems to function as a house-cleaning enzyme that removes non-canonical purine nucleotides from the nucleotide pool, thus preventing their incorporation into DNA/RNA and avoiding chromosomal lesions. This chain is dITP/XTP pyrophosphatase, found in Nostoc sp. (strain PCC 7120 / SAG 25.82 / UTEX 2576).